A 192-amino-acid polypeptide reads, in one-letter code: Thymidine kinase (192 aa).

ATP is bound by residues 9–16 (GAMNSGKT) and 85–88 (DEAQ). Glu86 acts as the Proton acceptor in catalysis. Cys143, Cys146, Cys180, and His183 together coordinate Zn(2+).

This sequence belongs to the thymidine kinase family. As to quaternary structure, homotetramer.

It is found in the cytoplasm. The catalysed reaction is thymidine + ATP = dTMP + ADP + H(+). In Lactiplantibacillus plantarum (strain ATCC BAA-793 / NCIMB 8826 / WCFS1) (Lactobacillus plantarum), this protein is Thymidine kinase.